An 89-amino-acid chain; its full sequence is Small ribosomal subunit protein uS14 (89 aa).

This sequence belongs to the universal ribosomal protein uS14 family. In terms of assembly, part of the 30S ribosomal subunit. Contacts proteins S3 and S10.

Binds 16S rRNA, required for the assembly of 30S particles and may also be responsible for determining the conformation of the 16S rRNA at the A site. The sequence is that of Small ribosomal subunit protein uS14 from Porphyromonas gingivalis (strain ATCC 33277 / DSM 20709 / CIP 103683 / JCM 12257 / NCTC 11834 / 2561).